A 1234-amino-acid polypeptide reads, in one-letter code: DNA-directed RNA polymerase subunit beta (1234 aa).

The disordered stretch occupies residues 1189 to 1212; that stretch reads VLSSQDNDYEEPEENDEEDELNLD. Residues 1195–1212 show a composition bias toward acidic residues; the sequence is NDYEEPEENDEEDELNLD.

Belongs to the RNA polymerase beta chain family. As to quaternary structure, the RNAP catalytic core consists of 2 alpha, 1 beta, 1 beta' and 1 omega subunit. When a sigma factor is associated with the core the holoenzyme is formed, which can initiate transcription.

The catalysed reaction is RNA(n) + a ribonucleoside 5'-triphosphate = RNA(n+1) + diphosphate. Its function is as follows. DNA-dependent RNA polymerase catalyzes the transcription of DNA into RNA using the four ribonucleoside triphosphates as substrates. In Clostridium kluyveri (strain NBRC 12016), this protein is DNA-directed RNA polymerase subunit beta.